A 434-amino-acid chain; its full sequence is Acyl transferase 15 (434 aa).

Active-site proton acceptor residues include His-164 and Asp-371.

Belongs to the plant acyltransferase family.

Functionally, involved in the incorporation of ferulate into the cell wall. The sequence is that of Acyl transferase 15 from Oryza sativa subsp. japonica (Rice).